The primary structure comprises 283 residues: Movement protein (283 aa).

It belongs to the tenuiviruses pc4 protein family.

Transports viral genome to neighboring plant cells directly through plasmosdesmata, without any budding. The movement protein allows efficient cell to cell propagation, by bypassing the host cell wall barrier. The polypeptide is Movement protein (Maize stripe virus (MStV)).